A 150-amino-acid polypeptide reads, in one-letter code: uncharacterized protein (150 aa).

In terms of domain architecture, HTH asnC-type spans L5 to G66. Residues I24–K43 constitute a DNA-binding region (H-T-H motif).

This is an uncharacterized protein from Pyrococcus abyssi (strain GE5 / Orsay).